A 128-amino-acid polypeptide reads, in one-letter code: uncharacterized protein (128 aa).

Transmembrane regions (helical) follow at residues 13-35 (FQMASFITSGLLVIIGLYGVFFV), 42-64 (IIALEILGSGVNLALIAIGYNGG), and 90-112 (LVLTNIVIEASMLAVMLGVSIIL).

It is found in the cell membrane. This is an uncharacterized protein from Methanocaldococcus jannaschii (strain ATCC 43067 / DSM 2661 / JAL-1 / JCM 10045 / NBRC 100440) (Methanococcus jannaschii).